Here is a 1502-residue protein sequence, read N- to C-terminus: Gem-associated protein 5 (1502 aa).

Positions 1 to 124 (MKPEPRTLPP…LHWSPTVKDL (124 aa)) are important for interaction with U1 snRNA. The segment at 13 to 15 (NWY) is interaction with U4 snRNA. Serine 48 is modified (phosphoserine). WD repeat units follow at residues 62–104 (GHTE…VVTE), 107–148 (LHQH…QHLF), 150–189 (EPRT…EVIH), 193–264 (GHDD…GVMV), 280–321 (TVKE…RRKY), 333–374 (HSRI…CCWT), 377–417 (SLGG…NNYD), 424–464 (GVKS…PPQI), 468–509 (YHKK…VVLQ), 533–573 (RYKL…LLCT), and 576–622 (QHHK…ESNP). Serine 624 bears the Phosphoserine mark. 2 WD repeats span residues 637 to 677 (GHTA…PLFN) and 680 to 720 (GHRG…HSRP). Disordered regions lie at residues 740 to 797 (KLKK…SPVV) and 819 to 838 (SSKA…EALL). A Glycyl lysine isopeptide (Lys-Gly) (interchain with G-Cter in SUMO2) cross-link involves residue lysine 754. Phosphoserine occurs at positions 757, 770, and 778. Residues 825–838 (LKKEPAKEKPEALL) show a composition bias toward basic and acidic residues. Position 845 is a phosphoserine (serine 845). Disordered stretches follow at residues 1309–1338 (VSDK…LSAE) and 1378–1427 (HQKS…SLPE). The stretch at 1355-1382 (ASLQTSQRTVAEVQETLAEMIRQHQKSQ) forms a coiled coil. The span at 1380–1391 (KSQLCKATTNGP) shows a compositional bias: polar residues. Basic and acidic residues predominate over residues 1392 to 1407 (SRDEPSRDEPSQEAER).

This sequence belongs to the WD repeat gemin-5 family. In terms of assembly, part of the core SMN complex that contains SMN1, GEMIN2/SIP1, DDX20/GEMIN3, GEMIN4, GEMIN5, GEMIN6, GEMIN7, GEMIN8 and STRAP/UNRIP. Part of the SMN-Sm complex that contains SMN1, GEMIN2/SIP1, DDX20/GEMIN3, GEMIN4, GEMIN5, GEMIN6, GEMIN7, GEMIN8, STRAP/UNRIP and the Sm proteins SNRPB, SNRPD1, SNRPD2, SNRPD3, SNRPE, SNRPF and SNRPG. Interacts directly with SMN1, SNRPB, SNRPD1, SNRPD2, SNRPD3 and SNRPE. Identified in a SMN complex that contains GEMIN2/SIP1. Interacts with cytosolic DDX20/GEMIN3 and GEMIN4. Interacts with SNRNP70 and HNRNPU. Identified in a complex with 80S ribosomes; binds to the 60S large ribosomal subunit. Interacts with the ribosomal subunits RPL3 and RPL4.

The protein localises to the nucleus. The protein resides in the nucleoplasm. Its subcellular location is the gem. It is found in the cytoplasm. The SMN complex catalyzes the assembly of small nuclear ribonucleoproteins (snRNPs), the building blocks of the spliceosome, and thereby plays an important role in the splicing of cellular pre-mRNAs. Most spliceosomal snRNPs contain a common set of Sm proteins SNRPB, SNRPD1, SNRPD2, SNRPD3, SNRPE, SNRPF and SNRPG that assemble in a heptameric protein ring on the Sm site of the small nuclear RNA to form the core snRNP (Sm core). In the cytosol, the Sm proteins SNRPD1, SNRPD2, SNRPE, SNRPF and SNRPG are trapped in an inactive 6S pICln-Sm complex by the chaperone CLNS1A that controls the assembly of the core snRNP. To assemble core snRNPs, the SMN complex accepts the trapped 5Sm proteins from CLNS1A forming an intermediate. Binding of snRNA inside 5Sm ultimately triggers eviction of the SMN complex, thereby allowing binding of SNRPD3 and SNRPB to complete assembly of the core snRNP. Within the SMN complex, GEMIN5 recognizes and delivers the small nuclear RNAs (snRNAs) to the SMN complex. Binds to the 7-methylguanosine cap of RNA molecules. Binds to the 3'-UTR of SMN1 mRNA and regulates its translation; does not affect mRNA stability. May play a role in the regulation of protein synthesis via its interaction with ribosomes. The chain is Gem-associated protein 5 (Gemin5) from Mus musculus (Mouse).